A 1322-amino-acid polypeptide reads, in one-letter code: Protein fantom (1322 aa).

The first 22 residues, M1–N22, serve as a signal peptide directing secretion. Residues Q15–L89 are a coiled coil. Residues R108–R119 show a composition bias toward polar residues. Disordered stretches follow at residues R108 to L151, K189 to T275, and R392 to E418. The span at S195–D217 shows a compositional bias: low complexity. The span at E224–D234 shows a compositional bias: acidic residues. Residues Q274–R362 are a coiled coil. Residues A456 to I538 adopt a coiled-coil conformation. Disordered regions lie at residues A891–N1094 and T1121–L1149. The span at T918–H927 shows a compositional bias: low complexity. Residues S956–E975 are compositionally biased toward acidic residues. The span at R984–V996 shows a compositional bias: basic and acidic residues. Over residues N1015–R1029 the composition is skewed to polar residues. Over residues P1042–E1067 the composition is skewed to acidic residues. Over residues E1068 to K1080 the composition is skewed to basic and acidic residues. Residues S1127 to P1139 are compositionally biased toward low complexity.

The protein belongs to the RPGRIP1 family. As to expression, expressed at the transition zone at the base of cilia. Expressed in ciliated sensory neurons, including the amphid neurons in the head.

Its subcellular location is the cell projection. It is found in the cilium. In terms of biological role, thought to have an important role in cilia formation and cilia-mediated chemosensation. Involved in the docking of other MKS/MKSR proteins localized to the transition zone of the cilia. This chain is Protein fantom (mks-5), found in Caenorhabditis elegans.